A 31-amino-acid polypeptide reads, in one-letter code: Leaf cyclotide 1 (31 aa).

The cyclopeptide (Ser-Asn) cross-link spans 1-31 (SISCGESCAMISFCFTEVIGCSCKNKVCYLN). Disulfide bonds link Cys-4–Cys-21, Cys-8–Cys-23, and Cys-14–Cys-28.

This is a cyclic peptide. Expressed in leaves.

In terms of biological role, probably participates in a plant defense mechanism. Has anti-human immunodeficiency virus activity. The polypeptide is Leaf cyclotide 1 (Viola hederacea (Australian violet)).